The primary structure comprises 212 residues: Imidazole glycerol phosphate synthase subunit HisH (212 aa).

The Glutamine amidotransferase type-1 domain maps to 2 to 212 (RVVVIDYNGG…ILGNFLRWTS (211 aa)). The active-site Nucleophile is the C85. Active-site residues include H192 and E194.

As to quaternary structure, heterodimer of HisH and HisF.

Its subcellular location is the cytoplasm. The catalysed reaction is 5-[(5-phospho-1-deoxy-D-ribulos-1-ylimino)methylamino]-1-(5-phospho-beta-D-ribosyl)imidazole-4-carboxamide + L-glutamine = D-erythro-1-(imidazol-4-yl)glycerol 3-phosphate + 5-amino-1-(5-phospho-beta-D-ribosyl)imidazole-4-carboxamide + L-glutamate + H(+). It carries out the reaction L-glutamine + H2O = L-glutamate + NH4(+). It functions in the pathway amino-acid biosynthesis; L-histidine biosynthesis; L-histidine from 5-phospho-alpha-D-ribose 1-diphosphate: step 5/9. In terms of biological role, IGPS catalyzes the conversion of PRFAR and glutamine to IGP, AICAR and glutamate. The HisH subunit catalyzes the hydrolysis of glutamine to glutamate and ammonia as part of the synthesis of IGP and AICAR. The resulting ammonia molecule is channeled to the active site of HisF. This is Imidazole glycerol phosphate synthase subunit HisH from Gluconobacter oxydans (strain 621H) (Gluconobacter suboxydans).